A 323-amino-acid chain; its full sequence is Beta-ketoacyl-[acyl-carrier-protein] synthase III (323 aa).

Residues C113 and H250 contribute to the active site. Residues 251–255 (QANKR) are ACP-binding. Residue N280 is part of the active site.

The protein belongs to the thiolase-like superfamily. FabH family. As to quaternary structure, homodimer.

The protein localises to the cytoplasm. It carries out the reaction malonyl-[ACP] + acetyl-CoA + H(+) = 3-oxobutanoyl-[ACP] + CO2 + CoA. The protein operates within lipid metabolism; fatty acid biosynthesis. Its function is as follows. Catalyzes the condensation reaction of fatty acid synthesis by the addition to an acyl acceptor of two carbons from malonyl-ACP. Catalyzes the first condensation reaction which initiates fatty acid synthesis and may therefore play a role in governing the total rate of fatty acid production. Possesses both acetoacetyl-ACP synthase and acetyl transacylase activities. Its substrate specificity determines the biosynthesis of branched-chain and/or straight-chain of fatty acids. This is Beta-ketoacyl-[acyl-carrier-protein] synthase III from Brucella abortus biovar 1 (strain 9-941).